We begin with the raw amino-acid sequence, 570 residues long: MKESPLITLVKRHSETHFANIKYGYYVLIISLVYLIGLALLRAFGRRTPSRSSSAFKNKIIYRLYDIDPAIHLGILFFAVLIPFYYHYSLTTQSTVYLKRLGRLSYALIPLNLFLTLRPNWFLRKNCTYTDFIPFHKWFSRIITVIGLLHGIFFIIKWAIDDNVSLKQKLILKTFNFVGFIISILVLFLLICSIGPMRRYNYRLFYIVHNLVNVAFILLTPIHSRPGVKFPFLLLNCTLLFIHIINRIVFAKSLMILNKNANYSKTNLVHVRLPRAILPDYFEPGSHIRISPYRRINPLYWLLPSHPYTIASLAEDNSIDLIIKETSTAEPGSQIESLRSNPKSFHLDQEKTYTLINSYPPSVPEECYSQGTNIAIICGGSGISFALPLFRHFFNKENVKYLKMIWLIKNYSEYELVLDYLKTNGLTFEKKLSNNKRISVFISGEYTAETRLDEITTNIDDENSEYEMGSFNNEDEDLSISNFNSENADSNDNTPETSHSPTKENGSLIEVKSKHSFTLSSELKSFNNESAQVNQNETWLFSCGPPSLLQLSKKYCNDERINFVCETYGL.

The next 7 helical transmembrane spans lie at 21 to 41, 70 to 90, 101 to 118, 142 to 162, 177 to 197, 204 to 224, and 230 to 250; these read IKYG…LALL, AIHL…HYSL, LGRL…LTLR, IITV…AIDD, FVGF…IGPM, LFYI…PIHS, and FPFL…RIVF. Positions 101–219 constitute a Ferric oxidoreductase domain; it reads LGRLSYALIP…NLVNVAFILL (119 aa). The FAD-binding FR-type domain maps to 250–388; it reads FAKSLMILNK…GGSGISFALP (139 aa). The span at 481–505 shows a compositional bias: polar residues; sequence SNFNSENADSNDNTPETSHSPTKEN. The disordered stretch occupies residues 481 to 507; sequence SNFNSENADSNDNTPETSHSPTKENGS.

This sequence belongs to the ferric reductase (FRE) family. AIM14 subfamily. Interacts with ribosomes.

The protein resides in the membrane. In terms of biological role, probable cell surface metalloreductase. May be involved in iron or copper homeostasis. The polypeptide is Probable metalloreductase AIM14 (AIM14) (Saccharomyces cerevisiae (strain RM11-1a) (Baker's yeast)).